Consider the following 224-residue polypeptide: MASPSFCLFAALLALVSWQAIASDPSPLQDFCVADKHSPVLVNGFACLDPKYVTADHFFKAAMLDTPRKTNKVGSNVTLINVMQIPGLNTLGISIARIDYAPLGQNPPHTHPRATEILTVLEGTLHVGFVTSNPNNTLFSKVLNKGDVFVFPVGLIHFQFNPNPHQPAVAIAALSSQNPGVITIANAVFGSKPPISDEVLAKAFQVGKGTIDWLQAQFWENNHY.

The signal sequence occupies residues 1–22 (MASPSFCLFAALLALVSWQAIA). A disulfide bridge links Cys-32 with Cys-47. A Cupin type-1 domain is found at 62–212 (AMLDTPRKTN…AFQVGKGTID (151 aa)). Asn-76 is a glycosylation site (N-linked (GlcNAc...) asparagine). Residues His-109, His-111, and Glu-116 each contribute to the Mn(2+) site. A glycan (N-linked (GlcNAc...) asparagine) is linked at Asn-135. His-157 provides a ligand contact to Mn(2+).

This sequence belongs to the germin family. Oligomer (believed to be a pentamer but probably hexamer).

The protein resides in the secreted. The protein localises to the extracellular space. It localises to the apoplast. Functionally, plays a role in broad-spectrum disease resistance. Probably has no oxalate oxidase activity even if the active site is conserved. The chain is Germin-like protein 8-9 from Oryza sativa subsp. japonica (Rice).